A 77-amino-acid polypeptide reads, in one-letter code: Large ribosomal subunit protein uL29 (77 aa).

This sequence belongs to the universal ribosomal protein uL29 family.

The protein is Large ribosomal subunit protein uL29 of Mycolicibacterium vanbaalenii (strain DSM 7251 / JCM 13017 / BCRC 16820 / KCTC 9966 / NRRL B-24157 / PYR-1) (Mycobacterium vanbaalenii).